The sequence spans 365 residues: Alpha-keto acid-binding periplasmic protein TakP (365 aa).

A signal peptide (tat-type signal) is located at residues 1–26 (MDRRSFITKAAVGGAAASALAAPALA). Substrate contacts are provided by residues 99 to 100 (YY), Q156, and R177. A Na(+)-binding site is contributed by Q156. E214, W215, and E240 together coordinate Na(+).

It belongs to the bacterial solute-binding protein 7 family. Homodimer. The complex comprises the extracytoplasmic solute receptor protein TakP, and the two transmembrane proteins TakQ and TakM. Predicted to be exported by the Tat system. The position of the signal peptide cleavage has not been experimentally proven.

The protein resides in the periplasm. In terms of biological role, part of the tripartite ATP-independent periplasmic (TRAP) transport system TakPQM involved in the uptake of alpha-keto acids. This protein specifically binds alpha-keto acids including pyruvate, oxobutyrate, oxovalerate and 4-methyl-2-oxovalerate. Ligand-binding affinity increases with the increasing chain length of the aliphatic backbone of the ligand. Is not able to bind alpha-ketoglutarate. The polypeptide is Alpha-keto acid-binding periplasmic protein TakP (Cereibacter sphaeroides (strain ATCC 17023 / DSM 158 / JCM 6121 / CCUG 31486 / LMG 2827 / NBRC 12203 / NCIMB 8253 / ATH 2.4.1.) (Rhodobacter sphaeroides)).